The chain runs to 279 residues: Thymidylate synthase (279 aa).

Position 21 (Arg21) interacts with dUMP. His51 lines the (6R)-5,10-methylene-5,6,7,8-tetrahydrofolate pocket. 126-127 (RR) is a dUMP binding site. Residue Cys159 is the Nucleophile of the active site. DUMP is bound by residues 179-182 (RSAD), Asn190, and 220-222 (HLY). Asp182 is a binding site for (6R)-5,10-methylene-5,6,7,8-tetrahydrofolate. Residue Ala278 coordinates (6R)-5,10-methylene-5,6,7,8-tetrahydrofolate.

It belongs to the thymidylate synthase family. Bacterial-type ThyA subfamily. As to quaternary structure, homodimer.

It is found in the cytoplasm. It carries out the reaction dUMP + (6R)-5,10-methylene-5,6,7,8-tetrahydrofolate = 7,8-dihydrofolate + dTMP. It functions in the pathway pyrimidine metabolism; dTTP biosynthesis. Catalyzes the reductive methylation of 2'-deoxyuridine-5'-monophosphate (dUMP) to 2'-deoxythymidine-5'-monophosphate (dTMP) while utilizing 5,10-methylenetetrahydrofolate (mTHF) as the methyl donor and reductant in the reaction, yielding dihydrofolate (DHF) as a by-product. This enzymatic reaction provides an intracellular de novo source of dTMP, an essential precursor for DNA biosynthesis. In Marinobacter nauticus (strain ATCC 700491 / DSM 11845 / VT8) (Marinobacter aquaeolei), this protein is Thymidylate synthase.